The chain runs to 179 residues: MPKLEAKKGLFQFYPHNLIWLGLSILAIIIDQWTKWIASTHLNYADPVPVLPFLNWTLLHNYGAAFSFLSDAGGWQHYLFTGLAGIVSIIFIFWLMRMPKNAMILPAAIALILGGALGNLIDRMTLGYVVDFIHIYYQNHHFPAFNIADSAITIGTILLLIDTFFLEKQRIQRAEVKHD.

Transmembrane regions (helical) follow at residues 10–30 (LFQF…AIII), 48–68 (VPVL…AFSF), 75–95 (WQHY…IFWL), and 101–121 (NAMI…GNLI). Catalysis depends on residues Asp-131 and Asp-149. Residues 141–161 (HFPAFNIADSAITIGTILLLI) traverse the membrane as a helical segment.

This sequence belongs to the peptidase A8 family.

It is found in the cell inner membrane. It carries out the reaction Release of signal peptides from bacterial membrane prolipoproteins. Hydrolyzes -Xaa-Yaa-Zaa-|-(S,diacylglyceryl)Cys-, in which Xaa is hydrophobic (preferably Leu), and Yaa (Ala or Ser) and Zaa (Gly or Ala) have small, neutral side chains.. Its pathway is protein modification; lipoprotein biosynthesis (signal peptide cleavage). Its function is as follows. This protein specifically catalyzes the removal of signal peptides from prolipoproteins. This Acinetobacter baylyi (strain ATCC 33305 / BD413 / ADP1) protein is Lipoprotein signal peptidase.